We begin with the raw amino-acid sequence, 299 residues long: Prohibitin-2 (299 aa).

A2 is subject to N-acetylalanine. Residues 19 to 49 (MGTALKLLLGAGAVAYGIRESVFTVEGGHRA) are necessary for transcriptional repression. Phosphotyrosine is present on Y128. An N6-acetyllysine modification is found at K147. Residues 150-174 (ASQLITQRAQVSLLIRRELTERAKD) form a necessary for transcriptional repression region. S151 is subject to Phosphoserine. Residues 190 to 238 (SREYTAAVEAKQVAQQEAQRAQFLVEKAKQEQRQKIVQAEGEAEAARML) adopt a coiled-coil conformation. K200, K250, and K262 each carry N6-acetyllysine.

Belongs to the prohibitin family. As to quaternary structure, the mitochondrial prohibitin complex consists of two subunits (PHB1 and PHB2), assembled into a membrane-associated ring-shaped supercomplex of approximately 1 mDa. Interacts with ESR1, HDAC1 and HDAC5. Interacts with ZNF703. Interacts with STOML2. Interacts with ARFGEF3. Interacts with SPHK2. Interacts with COX4I1; the interaction associates PHB2 with COX. Interacts with MAP1LC3B (membrane-bound form LC3-II); the interaction is direct and upon mitochondrial depolarization and proteasome-dependent outer membrane rupture. Interacts with IGFBP6 (via C-terminal domain). Interacts with CLPB. Interacts with CD86 (via cytoplasmic domain); the interactions increases after priming with CD40. Interacts with AFG3L2. Interacts with DNAJC19. Interacts with AKT2; this interaction may be important for myogenic differentiation. Phosphorylated. Tyrosine phosphorylation is indirectly stimulated by IGFBP6.

Its subcellular location is the mitochondrion inner membrane. The protein resides in the cytoplasm. The protein localises to the nucleus. It localises to the cell membrane. Protein with pleiotropic attributes mediated in a cell-compartment- and tissue-specific manner, which include the plasma membrane-associated cell signaling functions, mitochondrial chaperone, and transcriptional co-regulator of transcription factors and sex steroid hormones in the nucleus. Its function is as follows. In the mitochondria, together with PHB, forms large ring complexes (prohibitin complexes) in the inner mitochondrial membrane (IMM) and functions as a chaperone protein that stabilizes mitochondrial respiratory enzymes and maintains mitochondrial integrity in the IMM, which is required for mitochondrial morphogenesis, neuronal survival, and normal lifespan. The prohibitin complex, with DNAJC19, regulates cardiolipin remodeling and the protein turnover of OMA1 in a cardiolipin-binding manner. Also regulates cytochrome-c oxidase assembly (COX) and mitochondrial respiration. Binding to sphingoid 1-phosphate (SPP) modulates its regulator activity. Has a key role of mitophagy receptor involved in targeting mitochondria for autophagic degradation. Involved in mitochondrial-mediated antiviral innate immunity, activates RIG-I-mediated signal transduction and production of IFNB1 and pro-inflammatory cytokine IL6. Functionally, in the nucleus, serves as transcriptional co-regulator. Acts as a mediator of transcriptional repression by nuclear hormone receptors via recruitment of histone deacetylases. Functions as an estrogen receptor (ER)-selective coregulator that potentiates the inhibitory activities of antiestrogens and represses the activity of estrogens. Competes with NCOA1 for modulation of ER transcriptional activity. In terms of biological role, in the plasma membrane, is involved in IGFBP6-induced cell migration. Cooperates with CD86 to mediate CD86-signaling in B lymphocytes that regulates the level of IgG1 produced through the activation of distal signaling intermediates. Upon CD40 engagement, required to activate NF-kappa-B signaling pathway via phospholipase C and protein kinase C activation. The protein is Prohibitin-2 (PHB2) of Bos taurus (Bovine).